The primary structure comprises 251 residues: Flagellar brake protein YcgR (251 aa).

One can recognise a PilZ domain in the interval 127 to 239 (QRRDGFRVRP…ASRTLQRYID (113 aa)).

Belongs to the YcgR family. In terms of assembly, monomer. Interacts with the flagellar basal bodies.

It localises to the bacterial flagellum basal body. Acts as a flagellar brake, regulating swimming and swarming in a bis-(3'-5') cyclic diguanylic acid (c-di-GMP)-dependent manner. Binds 1 c-di-GMP dimer per subunit. Increasing levels of c-di-GMP lead to decreased motility. In Leptothrix cholodnii (strain ATCC 51168 / LMG 8142 / SP-6) (Leptothrix discophora (strain SP-6)), this protein is Flagellar brake protein YcgR.